A 178-amino-acid chain; its full sequence is FXYD domain-containing ion transport regulator 5 (178 aa).

The N-terminal stretch at 1–21 (MSPSGRLCLLTIVGLILPTRG) is a signal peptide. The Extracellular segment spans residues 22-145 (QTLKDTTSSS…FYDEHTLRKR (124 aa)). Residues 23–131 (TLKDTTSSSS…QTLKPSGFHE (109 aa)) are disordered. 2 stretches are compositionally biased toward low complexity: residues 26-36 (DTTSSSSADST) and 68-77 (TPQPQTQTQQ). The span at 103 to 125 (DTTTLSERPSPSTDVQTDPQTLK) shows a compositional bias: polar residues. Residues 146 to 164 (GLLVAAVLFITGIIILTSG) traverse the membrane as a helical segment. The Cytoplasmic segment spans residues 165-178 (KCRQLSRLCRNRCR).

Belongs to the FXYD family. In terms of assembly, regulatory subunit of the sodium/potassium-transporting ATPase which is composed of a catalytic alpha subunit, a non-catalytic beta subunit and an additional regulatory subunit. The regulatory subunit, a member of the FXYD protein family, modulates the enzymatic activity in a tissue- and isoform-specific way by changing affinities of the Na+/K+-ATPase toward Na(+), K(+) or ATP. Glycosylated.

The protein resides in the cell membrane. It localises to the basolateral cell membrane. Associates with and regulates the activity of the sodium/potassium-transporting ATPase (NKA) which catalyzes the hydrolysis of ATP coupled with the exchange of Na(+) and K(+) ions across the plasma membrane. May increase NKA activity by increasing the apparent affinity for Na(+). Involved in down-regulation of E-cadherin which results in reduced cell adhesion. Promotes metastasis. The polypeptide is FXYD domain-containing ion transport regulator 5 (FXYD5) (Homo sapiens (Human)).